We begin with the raw amino-acid sequence, 235 residues long: Phosphoribosylaminoimidazole-succinocarboxamide synthase (235 aa).

The protein belongs to the SAICAR synthetase family.

It catalyses the reaction 5-amino-1-(5-phospho-D-ribosyl)imidazole-4-carboxylate + L-aspartate + ATP = (2S)-2-[5-amino-1-(5-phospho-beta-D-ribosyl)imidazole-4-carboxamido]succinate + ADP + phosphate + 2 H(+). Its pathway is purine metabolism; IMP biosynthesis via de novo pathway; 5-amino-1-(5-phospho-D-ribosyl)imidazole-4-carboxamide from 5-amino-1-(5-phospho-D-ribosyl)imidazole-4-carboxylate: step 1/2. The polypeptide is Phosphoribosylaminoimidazole-succinocarboxamide synthase (Clostridium botulinum (strain Alaska E43 / Type E3)).